A 150-amino-acid chain; its full sequence is Large ribosomal subunit protein uL11 (150 aa).

This sequence belongs to the universal ribosomal protein uL11 family. Part of the ribosomal stalk of the 50S ribosomal subunit. Interacts with L10 and the large rRNA to form the base of the stalk. L10 forms an elongated spine to which L12 dimers bind in a sequential fashion forming a multimeric L10(L12)X complex. In terms of processing, one or more lysine residues are methylated.

In terms of biological role, forms part of the ribosomal stalk which helps the ribosome interact with GTP-bound translation factors. In Jannaschia sp. (strain CCS1), this protein is Large ribosomal subunit protein uL11.